The following is a 202-amino-acid chain: Glycerol-3-phosphate acyltransferase (202 aa).

Helical transmembrane passes span alanine 2–valine 22, aspartate 82–histidine 102, alanine 119–phenylalanine 139, and valine 158–isoleucine 178.

The protein belongs to the PlsY family. In terms of assembly, probably interacts with PlsX.

Its subcellular location is the cell inner membrane. The enzyme catalyses an acyl phosphate + sn-glycerol 3-phosphate = a 1-acyl-sn-glycero-3-phosphate + phosphate. It participates in lipid metabolism; phospholipid metabolism. Functionally, catalyzes the transfer of an acyl group from acyl-phosphate (acyl-PO(4)) to glycerol-3-phosphate (G3P) to form lysophosphatidic acid (LPA). This enzyme utilizes acyl-phosphate as fatty acyl donor, but not acyl-CoA or acyl-ACP. This Cupriavidus taiwanensis (strain DSM 17343 / BCRC 17206 / CCUG 44338 / CIP 107171 / LMG 19424 / R1) (Ralstonia taiwanensis (strain LMG 19424)) protein is Glycerol-3-phosphate acyltransferase.